We begin with the raw amino-acid sequence, 90 residues long: Conotoxin Vc22.1 (90 aa).

The first 18 residues, 1 to 18 (MMTRVFLAMFFLLVLTKG), serve as a signal peptide directing secretion.

The protein belongs to the E superfamily. Contains 4 disulfide bonds. In terms of tissue distribution, expressed by the venom duct.

The protein localises to the secreted. This chain is Conotoxin Vc22.1, found in Conus victoriae (Queen Victoria cone).